A 267-amino-acid chain; its full sequence is Putative carboxymethylenebutenolidase (267 aa).

Residues Cys137, Asp194, and His226 contribute to the active site.

It belongs to the dienelactone hydrolase family.

The enzyme catalyses 2-(5-oxo-2,5-dihydrofuran-2-ylidene)acetate + H2O = 4-oxohex-2-enedioate + H(+). This is Putative carboxymethylenebutenolidase from Yersinia pestis.